Here is a 130-residue protein sequence, read N- to C-terminus: Small ribosomal subunit protein uS8 (130 aa).

Belongs to the universal ribosomal protein uS8 family.

The sequence is that of Small ribosomal subunit protein uS8 (RPS22) from Candida glabrata (strain ATCC 2001 / BCRC 20586 / JCM 3761 / NBRC 0622 / NRRL Y-65 / CBS 138) (Yeast).